Reading from the N-terminus, the 332-residue chain is Phosphoribulokinase (332 aa).

The protein belongs to the phosphoribulokinase family.

The enzyme catalyses D-ribulose 5-phosphate + ATP = D-ribulose 1,5-bisphosphate + ADP + H(+). The protein operates within carbohydrate biosynthesis; Calvin cycle. In Synechocystis sp. (strain ATCC 27184 / PCC 6803 / Kazusa), this protein is Phosphoribulokinase (prk).